Reading from the N-terminus, the 129-residue chain is 3-aminoacrylate deaminase RutC (129 aa).

The protein belongs to the RutC family.

It carries out the reaction (Z)-3-aminoacrylate + H2O + H(+) = 3-oxopropanoate + NH4(+). In terms of biological role, involved in pyrimidine catabolism. Catalyzes the deamination of 3-aminoacrylate to malonic semialdehyde, a reaction that can also occur spontaneously. RutC may facilitate the reaction and modulate the metabolic fitness, rather than catalyzing essential functions. This chain is 3-aminoacrylate deaminase RutC, found in Caulobacter segnis (strain ATCC 21756 / DSM 7131 / JCM 7823 / NBRC 15250 / LMG 17158 / TK0059) (Mycoplana segnis).